The sequence spans 353 residues: MTFAPLQNDRFLRALNRETVDRTPIWMMRQAGRYLPEYRAAREHAGSFMDLCKNADLACEVTLQPLERYPLDAAILFSDILTIPDAMGLGLYFETGEGPKFRKVVRTEADVAALPIPDAESDLGYVMNAVSTIRGALNGRVPLIGFSGSPWTLATYMVEGGSSKDFRHLKAMVYSQPELAHAMLDKLAQSVTGYLNAQIRHGAQAVQIFDTWGGALSAEAYKEFSLRYMQQIVDGLIRDNEGRKVPVILFTKNGGLWLESMAATGCDALGLDWTINIGDARRRVGDKVALQGNMDPAVLYASPQAIRAEVKRILDDFGDHPGHIFNLGHGITPQVDPEHAKVFIEAVVELSQK.

Substrate contacts are provided by residues 29–33 (RQAGR), D79, Y156, T211, and H329.

The protein belongs to the uroporphyrinogen decarboxylase family. Homodimer.

The protein resides in the cytoplasm. The enzyme catalyses uroporphyrinogen III + 4 H(+) = coproporphyrinogen III + 4 CO2. It participates in porphyrin-containing compound metabolism; protoporphyrin-IX biosynthesis; coproporphyrinogen-III from 5-aminolevulinate: step 4/4. In terms of biological role, catalyzes the decarboxylation of four acetate groups of uroporphyrinogen-III to yield coproporphyrinogen-III. The chain is Uroporphyrinogen decarboxylase from Alcanivorax borkumensis (strain ATCC 700651 / DSM 11573 / NCIMB 13689 / SK2).